We begin with the raw amino-acid sequence, 116 residues long: Large ribosomal subunit protein bL17 (116 aa).

Belongs to the bacterial ribosomal protein bL17 family. As to quaternary structure, part of the 50S ribosomal subunit. Contacts protein L32.

In Nostoc punctiforme (strain ATCC 29133 / PCC 73102), this protein is Large ribosomal subunit protein bL17.